Reading from the N-terminus, the 86-residue chain is UPF0367 protein PMN2A_1492 (86 aa).

It belongs to the UPF0367 family.

In Prochlorococcus marinus (strain NATL2A), this protein is UPF0367 protein PMN2A_1492.